The chain runs to 110 residues: Protein P2 (110 aa).

Over residues 72 to 82 the composition is skewed to polar residues; sequence KLPTTSGSSSA. Residues 72 to 110 are disordered; the sequence is KLPTTSGSSSAGAIVPAGSNTQGQYKAPPKKGIKRKYPA. Positions 99–110 are enriched in basic residues; sequence PPKKGIKRKYPA.

The sequence is that of Protein P2 from Oryza sativa (Rice).